Reading from the N-terminus, the 506-residue chain is Apolipoprotein N-acyltransferase (506 aa).

The next 7 membrane-spanning stretches (helical) occupy residues 10 to 30 (ANAKVLSRWLLFVGLGIAGWG), 33 to 53 (LALPPVSGWFLAFVGIVPLWW), 57 to 77 (VLAPLWAAIAGLCWGWGFYGS), 105 to 125 (IWLCLSSWGAVLSGSWALLMA), 139 to 159 (WGVTLWCALEALWSHSPLWWI), 176 to 196 (LAGPTTITAVVMTVNGLVTLS), and 205 to 225 (VGLAMTLVAAIALNGVLSVRV). Residues 238 to 473 (IQGNIPTREK…FVIYAATIFR (236 aa)) form the CN hydrolase domain. E279 functions as the Proton acceptor in the catalytic mechanism. K336 is an active-site residue. C385 acts as the Nucleophile in catalysis. Residues 483-500 (YGDWLLPLLLGMLSLSVL) traverse the membrane as a helical segment.

It belongs to the CN hydrolase family. Apolipoprotein N-acyltransferase subfamily.

Its subcellular location is the cell inner membrane. It catalyses the reaction N-terminal S-1,2-diacyl-sn-glyceryl-L-cysteinyl-[lipoprotein] + a glycerophospholipid = N-acyl-S-1,2-diacyl-sn-glyceryl-L-cysteinyl-[lipoprotein] + a 2-acyl-sn-glycero-3-phospholipid + H(+). Its pathway is protein modification; lipoprotein biosynthesis (N-acyl transfer). Its function is as follows. Catalyzes the phospholipid dependent N-acylation of the N-terminal cysteine of apolipoprotein, the last step in lipoprotein maturation. This Thermosynechococcus vestitus (strain NIES-2133 / IAM M-273 / BP-1) protein is Apolipoprotein N-acyltransferase.